The following is a 477-amino-acid chain: Cyclin-A1-2 (477 aa).

Belongs to the cyclin family. Cyclin AB subfamily.

This Oryza sativa subsp. japonica (Rice) protein is Cyclin-A1-2 (CYCA1-2).